A 228-amino-acid chain; its full sequence is MATWANLGLQDSSSPLMEQLNFFHDHTLLILTMITILVGYIMGMLSFNKFTNRFLLHGQTIEIIWTVLPAIILMFIAFPSLRLLYLMDEINTPSITLKSIGHQWYWSYEYSDFLNLEFDSYMVPTNELETNGFRLLDVDNRVVLPMNNQIRILVTATDVLHSWTVPSLGVKVDATPGRLNQLNFLINRPGLFFGQCSEICGANHSFMPIVIESIPMNYFIKWITSMTN.

At 1-26 (MATWANLGLQDSSSPLMEQLNFFHDH) the chain is on the mitochondrial intermembrane side. A helical transmembrane segment spans residues 27 to 48 (TLLILTMITILVGYIMGMLSFN). Topologically, residues 49-62 (KFTNRFLLHGQTIE) are mitochondrial matrix. Residues 63-82 (IIWTVLPAIILMFIAFPSLR) traverse the membrane as a helical segment. Topologically, residues 83-228 (LLYLMDEINT…FIKWITSMTN (146 aa)) are mitochondrial intermembrane. Residues histidine 161, cysteine 196, glutamate 198, cysteine 200, histidine 204, and methionine 207 each coordinate Cu cation. Glutamate 198 serves as a coordination point for Mg(2+).

The protein belongs to the cytochrome c oxidase subunit 2 family. As to quaternary structure, component of the cytochrome c oxidase (complex IV, CIV), a multisubunit enzyme composed of a catalytic core of 3 subunits and several supernumerary subunits. The complex exists as a monomer or a dimer and forms supercomplexes (SCs) in the inner mitochondrial membrane with ubiquinol-cytochrome c oxidoreductase (cytochrome b-c1 complex, complex III, CIII). Cu cation serves as cofactor.

The protein resides in the mitochondrion inner membrane. It carries out the reaction 4 Fe(II)-[cytochrome c] + O2 + 8 H(+)(in) = 4 Fe(III)-[cytochrome c] + 2 H2O + 4 H(+)(out). Functionally, component of the cytochrome c oxidase, the last enzyme in the mitochondrial electron transport chain which drives oxidative phosphorylation. The respiratory chain contains 3 multisubunit complexes succinate dehydrogenase (complex II, CII), ubiquinol-cytochrome c oxidoreductase (cytochrome b-c1 complex, complex III, CIII) and cytochrome c oxidase (complex IV, CIV), that cooperate to transfer electrons derived from NADH and succinate to molecular oxygen, creating an electrochemical gradient over the inner membrane that drives transmembrane transport and the ATP synthase. Cytochrome c oxidase is the component of the respiratory chain that catalyzes the reduction of oxygen to water. Electrons originating from reduced cytochrome c in the intermembrane space (IMS) are transferred via the dinuclear copper A center (CU(A)) of subunit 2 and heme A of subunit 1 to the active site in subunit 1, a binuclear center (BNC) formed by heme A3 and copper B (CU(B)). The BNC reduces molecular oxygen to 2 water molecules using 4 electrons from cytochrome c in the IMS and 4 protons from the mitochondrial matrix. In Anopheles gambiae (African malaria mosquito), this protein is Cytochrome c oxidase subunit 2 (COII).